A 29-amino-acid polypeptide reads, in one-letter code: Cytochrome b6-f complex subunit 8 (29 aa).

The chain crosses the membrane as a helical span at residues 3-23 (IVSLAWAVLMVVFTFSLSLVV).

The protein belongs to the PetN family. In terms of assembly, the 4 large subunits of the cytochrome b6-f complex are cytochrome b6, subunit IV (17 kDa polypeptide, PetD), cytochrome f and the Rieske protein, while the 4 small subunits are PetG, PetL, PetM and PetN. The complex functions as a dimer.

Its subcellular location is the plastid. It is found in the chloroplast thylakoid membrane. In terms of biological role, component of the cytochrome b6-f complex, which mediates electron transfer between photosystem II (PSII) and photosystem I (PSI), cyclic electron flow around PSI, and state transitions. This is Cytochrome b6-f complex subunit 8 from Drimys granadensis.